Here is an 829-residue protein sequence, read N- to C-terminus: Cation/H(+) antiporter 14 (829 aa).

A run of 12 helical transmembrane segments spans residues Tyr-48 to Tyr-68, Gly-77 to Ser-97, Ser-117 to Ile-137, Ile-145 to Phe-165, Ile-180 to Ala-200, Asn-215 to Leu-235, Leu-240 to Cys-260, Ile-281 to Gly-301, Leu-329 to Thr-349, Ile-361 to Tyr-383, Phe-392 to Trp-412, and Leu-425 to Tyr-445. The residue at position 827 (Ser-827) is a Phosphoserine.

This sequence belongs to the monovalent cation:proton antiporter 2 (CPA2) transporter (TC 2.A.37) family. CHX (TC 2.A.37.4) subfamily. As to expression, preferentially expressed in pollen but also detected in vegetative tissues like leaf trichomes and root vascular tissues.

The protein resides in the membrane. In terms of biological role, may operate as a cation/H(+) antiporter. This Arabidopsis thaliana (Mouse-ear cress) protein is Cation/H(+) antiporter 14 (CHX14).